The following is a 146-amino-acid chain: Large ribosomal subunit protein uL15 (146 aa).

Positions M1–P56 are disordered. Gly residues-rich tracts occupy residues R21–Q35 and S42–G52.

The protein belongs to the universal ribosomal protein uL15 family. As to quaternary structure, part of the 50S ribosomal subunit.

In terms of biological role, binds to the 23S rRNA. The sequence is that of Large ribosomal subunit protein uL15 from Clostridium botulinum (strain Langeland / NCTC 10281 / Type F).